The sequence spans 338 residues: DNA-directed RNA polymerase subunit alpha (338 aa).

The alpha N-terminal domain (alpha-NTD) stretch occupies residues 1–234 (MIHKNWAELI…DQLSIFVNFD (234 aa)). Positions 250 to 338 (FNPLLLKKVD…DLAKKFEDAF (89 aa)) are alpha C-terminal domain (alpha-CTD).

The protein belongs to the RNA polymerase alpha chain family. In terms of assembly, homodimer. The RNAP catalytic core consists of 2 alpha, 1 beta, 1 beta' and 1 omega subunit. When a sigma factor is associated with the core the holoenzyme is formed, which can initiate transcription.

The catalysed reaction is RNA(n) + a ribonucleoside 5'-triphosphate = RNA(n+1) + diphosphate. In terms of biological role, DNA-dependent RNA polymerase catalyzes the transcription of DNA into RNA using the four ribonucleoside triphosphates as substrates. The polypeptide is DNA-directed RNA polymerase subunit alpha (Ruegeria pomeroyi (strain ATCC 700808 / DSM 15171 / DSS-3) (Silicibacter pomeroyi)).